The following is a 64-amino-acid chain: Large ribosomal subunit protein bL32 (64 aa).

The disordered stretch occupies residues Met1–Glu35.

Belongs to the bacterial ribosomal protein bL32 family.

The chain is Large ribosomal subunit protein bL32 from Xanthomonas campestris pv. campestris (strain 8004).